The chain runs to 175 residues: Shikimate kinase (175 aa).

14 to 19 (GAGKST) lines the ATP pocket. S18 contributes to the Mg(2+) binding site. Substrate contacts are provided by D36, R60, and G82. Residue R120 participates in ATP binding. Position 140 (R140) interacts with substrate. ATP is bound at residue Q157.

This sequence belongs to the shikimate kinase family. Monomer. Mg(2+) serves as cofactor.

It is found in the cytoplasm. The catalysed reaction is shikimate + ATP = 3-phosphoshikimate + ADP + H(+). Its pathway is metabolic intermediate biosynthesis; chorismate biosynthesis; chorismate from D-erythrose 4-phosphate and phosphoenolpyruvate: step 5/7. In terms of biological role, catalyzes the specific phosphorylation of the 3-hydroxyl group of shikimic acid using ATP as a cosubstrate. In Histophilus somni (strain 2336) (Haemophilus somnus), this protein is Shikimate kinase.